The sequence spans 183 residues: MLMLEREKLARLIKKRSLKVADEPVFKLSSGKLSRYYVDLKQITFDPEGDYLIGKAMYELVKEFNPDACGGLTLGADPIAYAIAFVSLMDSNPIKPFVVRKEPKGHGMKRQIEGLLNPGERVAVLEDVVTTGSSALKAVKACREYGLEVIGVFAVVDREEGGRENIEKEGIPLYSLFKLSELL.

5-phospho-alpha-D-ribose 1-diphosphate contacts are provided by residues arginine 100, lysine 101, lysine 104, histidine 106, and 126–134 (EDVVTTGSS). Positions 130 and 158 each coordinate orotate.

The protein belongs to the purine/pyrimidine phosphoribosyltransferase family. PyrE subfamily. In terms of assembly, homodimer. It depends on Mg(2+) as a cofactor.

It catalyses the reaction orotidine 5'-phosphate + diphosphate = orotate + 5-phospho-alpha-D-ribose 1-diphosphate. It participates in pyrimidine metabolism; UMP biosynthesis via de novo pathway; UMP from orotate: step 1/2. Its function is as follows. Catalyzes the transfer of a ribosyl phosphate group from 5-phosphoribose 1-diphosphate to orotate, leading to the formation of orotidine monophosphate (OMP). This Aquifex aeolicus (strain VF5) protein is Orotate phosphoribosyltransferase.